The following is a 369-amino-acid chain: Molybdenum import ATP-binding protein ModC (369 aa).

The ABC transporter domain occupies 4-239 (LQLRAVVADR…PRSRFGARIA (236 aa)). An ATP-binding site is contributed by 31 to 38 (GPNGAGKS). A Mop domain is found at 293-361 (HGSPRNIVGL…VKAQEVALHP (69 aa)).

The protein belongs to the ABC transporter superfamily. Molybdate importer (TC 3.A.1.8) family. The complex is composed of two ATP-binding proteins (ModC), two transmembrane proteins (ModB) and a solute-binding protein (ModA).

Its subcellular location is the cell membrane. The catalysed reaction is molybdate(out) + ATP + H2O = molybdate(in) + ADP + phosphate + H(+). Part of the ABC transporter complex ModABC involved in molybdenum import. Responsible for energy coupling to the transport system. The sequence is that of Molybdenum import ATP-binding protein ModC from Mycobacterium tuberculosis (strain CDC 1551 / Oshkosh).